The following is a 175-amino-acid chain: Ribosome maturation factor RimM (175 aa).

The PRC barrel domain occupies Glu97–Leu169.

This sequence belongs to the RimM family. As to quaternary structure, binds ribosomal protein uS19.

It is found in the cytoplasm. An accessory protein needed during the final step in the assembly of 30S ribosomal subunit, possibly for assembly of the head region. Essential for efficient processing of 16S rRNA. May be needed both before and after RbfA during the maturation of 16S rRNA. It has affinity for free ribosomal 30S subunits but not for 70S ribosomes. The sequence is that of Ribosome maturation factor RimM from Christiangramia forsetii (strain DSM 17595 / CGMCC 1.15422 / KT0803) (Gramella forsetii).